A 60-amino-acid polypeptide reads, in one-letter code: Prokaryotic ubiquitin-like protein UBact (60 aa).

The tract at residues 1–60 (MPERKTQPTTDQPWTKPNDGGDESGPRSPEVERPNTRDLLERMKRVDPRQARRYRQRSGE) is disordered. Positions 29–50 (PEVERPNTRDLLERMKRVDPRQ) are enriched in basic and acidic residues. Positions 51–60 (ARRYRQRSGE) are enriched in basic residues. Residue Glu-60 forms an Isoglutamyl lysine isopeptide (Glu-Lys) (interchain with K-? in acceptor proteins) linkage.

Belongs to the ubiquitin-like protein UBact family.

In terms of biological role, may function as a protein modifier covalently attached to lysine residues of substrate proteins. This may serve to target the modified proteins for degradation by proteasomes. This Fraserbacteria sp. (strain RBG_16_55_9) protein is Prokaryotic ubiquitin-like protein UBact.